Consider the following 130-residue polypeptide: Cystatin (130 aa).

A signal peptide spans 1–19 (MEWKIVVPLFAVAFTVANA). Positions 67–71 (QVVSG) match the Secondary area of contact motif. 2 cysteine pairs are disulfide-bonded: Cys-85-Cys-94 and Cys-108-Cys-128.

The protein belongs to the cystatin family.

Its subcellular location is the secreted. Cysteine proteinase inhibitor. The chain is Cystatin from Oncorhynchus mykiss (Rainbow trout).